Reading from the N-terminus, the 420-residue chain is UDP-N-acetylglucosamine 1-carboxyvinyltransferase (420 aa).

A phosphoenolpyruvate-binding site is contributed by 22 to 23 (KN). Arg-93 lines the UDP-N-acetyl-alpha-D-glucosamine pocket. Cys-117 serves as the catalytic Proton donor. A 2-(S-cysteinyl)pyruvic acid O-phosphothioketal modification is found at Cys-117. Asp-307 and Ile-329 together coordinate UDP-N-acetyl-alpha-D-glucosamine.

This sequence belongs to the EPSP synthase family. MurA subfamily.

It localises to the cytoplasm. The catalysed reaction is phosphoenolpyruvate + UDP-N-acetyl-alpha-D-glucosamine = UDP-N-acetyl-3-O-(1-carboxyvinyl)-alpha-D-glucosamine + phosphate. It participates in cell wall biogenesis; peptidoglycan biosynthesis. Its function is as follows. Cell wall formation. Adds enolpyruvyl to UDP-N-acetylglucosamine. In Saccharophagus degradans (strain 2-40 / ATCC 43961 / DSM 17024), this protein is UDP-N-acetylglucosamine 1-carboxyvinyltransferase.